The primary structure comprises 337 residues: MEKRTNYPQLTEKQNHFFKLIVDTYIKTGASVASKELVKRCNLKCSSATIRNVMASLEQIGFLEKYHISSGRVPSTLGLEYYAKFLVYNPKKYFDQKLEDLLAKRRIKIDATLEEAAAIVSEVAGVTVVATSNNAAETMKSIQLTTLSELSAIVVIVTSSGRVESKIFNFENSDISLEDLRVAIRLFKERLVDTPLIHLANKARALTPIFGQQLKNYELILQKFIKNIFVFEEETTNKTFNKGAIVLSRNISREEIANVLDLIEKHSVWESIDNDLDEDNNIKLDVSRPNLSIISKKIDFSNEKNIKEITVIGPNNLDYGESFEALEMLEKIIKEKK.

Belongs to the HrcA family.

Functionally, negative regulator of class I heat shock genes (grpE-dnaK-dnaJ and groELS operons). Prevents heat-shock induction of these operons. In Metamycoplasma arthritidis (strain 158L3-1) (Mycoplasma arthritidis), this protein is Heat-inducible transcription repressor HrcA.